A 476-amino-acid polypeptide reads, in one-letter code: Doublesex- and mab-3-related transcription factor 3 (476 aa).

Residues 29–76 constitute a DNA-binding region (DM); the sequence is CARCRNHGVLSWLKGHKRYCRFKDCTCEKCILIIERQRVMAAQVALRR. Disordered regions lie at residues 89-130 and 147-195; these read DSLR…RPTA and GTLP…SKNC. Positions 102–121 are enriched in low complexity; it reads DAAATAATASQSSPASQASQ. The span at 165-174 shows a compositional bias: polar residues; sequence DSSSTDNTAE. The segment covering 176-185 has biased composition (basic and acidic residues); it reads FSDKDTDQRS. The DMA domain maps to 255-290; it reads RPPLEVLKKIFPNQKPTVLELILKGCGGDLVSAVEV. The span at 418-432 shows a compositional bias: polar residues; it reads NSTSVFRSSPVLSSR. The segment at 418 to 476 is disordered; the sequence is NSTSVFRSSPVLSSRTTEDPRISIPDDGCPIVTKQSIYTEDDYDERSDSSDSRILNTSS.

This sequence belongs to the DMRT family. As to expression, expressed in the ventral spinal cord, in a restrical population of neurons migrating ventrically in the developing spinal cord at 11.5 dpc.

It is found in the nucleus. In terms of biological role, probable transcription factor that plays a role in configuring the spinal circuits controlling stride in vertebrates. Involved in neuronal specification within specific subdivision of spinal cord neurons and in the development of a coordinated locomotor network controlling limb movements. May regulate transcription during sexual development. The polypeptide is Doublesex- and mab-3-related transcription factor 3 (Dmrt3) (Mus musculus (Mouse)).